Consider the following 431-residue polypeptide: E3 ubiquitin-protein ligase RNF128 (431 aa).

Positions 1–38 (MGQLPGAGVFCRGGCGFSRLLAWCFLLVLSPQTPGSRG) are cleaved as a signal peptide. Asn48, Asn59, and Asn101 each carry an N-linked (GlcNAc...) asparagine glycan. Residues 75–186 (SPLEPVAGVL…LKGTKILQSI (112 aa)) form the PA domain. Residues 211 to 231 (IFFVSVSFFIITAATVGYFIF) traverse the membrane as a helical segment. An RING-type; atypical zinc finger spans residues 280 to 321 (CAVCIELYKPNDLVRILTCNHVFHKTCVDPWLLEHRTCPMCK). A compositionally biased stretch (polar residues) spans 345–354 (VSNETSSNAS). Residues 345–431 (VSNETSSNAS…QETTVREIKS (87 aa)) are disordered.

Post-translationally, auto-ubiquitinated. Controls the development of T-cell clonal anergy by ubiquitination.

The protein localises to the cytoplasm. Its subcellular location is the endomembrane system. It is found in the cytoskeleton. It localises to the perinuclear region. The catalysed reaction is S-ubiquitinyl-[E2 ubiquitin-conjugating enzyme]-L-cysteine + [acceptor protein]-L-lysine = [E2 ubiquitin-conjugating enzyme]-L-cysteine + N(6)-ubiquitinyl-[acceptor protein]-L-lysine.. The protein operates within protein modification; protein ubiquitination. Functionally, E3 ubiquitin-protein ligase that catalyzes 'Lys-27', 'Lys-48'- or 'Lys-63'-linked polyubiquitin chains formation and plays a role in different biological processes such as modulation of immune response, cytoskeletal dynamics or protein homeostasis. Inhibits IL2 and IL4 transcription, thereby playing an important role in the induction of the anergic phenotype, a long-term stable state of T-lymphocyte unresponsiveness to antigenic stimulation associated with the blockade of interleukin production. Ubiquitinates ARPC5 with 'Lys-48' linkages and COR1A with 'Lys-63' linkages leading to their degradation, down-regulation of these cytoskeletal components results in impaired lamellipodium formation and reduced accumulation of F-actin at the immunological synapse. Functions in the patterning of the dorsal ectoderm; sensitizes ectoderm to respond to neural-inducing signals. Plays a positive role in innate immune response by promoting 'Lys-63'-linked ubiquitination of TBK1 after RNA- or DNA-virus infection. Regulates alveolar macrophage activation and neutrophil infiltration by interacting with TLR4, targeting it for degradation, and inhibiting NF-kappa-B activation, hence decreasing pro-inflammatory cytokines. Negatively regulates the IL-3/STAT5 signaling pathway by facilitating 'Lys-27'-linked polyubiquitination of IL3RA leading to its degradation via lysosomal pathway. Directly regulates the N-glycosylation process in the endoplasmic reticulum by targeting the glycosyl-transferase RPN1 for ubiquitination and degradation. Other substrates targeted for degradation by RNF128 include transmembrane proteins CD40L, CD83 or the tetraspanin CD151. The protein is E3 ubiquitin-protein ligase RNF128 (RNF128) of Bos taurus (Bovine).